Reading from the N-terminus, the 347-residue chain is Probable ribonucleotide transport ATP-binding protein mkl (347 aa).

Positions 16–252 constitute an ABC transporter domain; it reads IEVKGLTKSF…DEPVVRQFLN (237 aa). Residue 48-55 participates in ATP binding; the sequence is GPSGTGKS.

Belongs to the ABC transporter superfamily.

Functionally, not known, could be involved in the transport of ribonucleotides. This chain is Probable ribonucleotide transport ATP-binding protein mkl (mkl), found in Mycobacterium leprae (strain TN).